A 202-amino-acid polypeptide reads, in one-letter code: ATP-dependent Clp protease proteolytic subunit (202 aa).

The Nucleophile role is filled by S101. H126 is a catalytic residue.

The protein belongs to the peptidase S14 family. As to quaternary structure, component of the chloroplastic Clp protease core complex.

It is found in the plastid. Its subcellular location is the chloroplast stroma. The enzyme catalyses Hydrolysis of proteins to small peptides in the presence of ATP and magnesium. alpha-casein is the usual test substrate. In the absence of ATP, only oligopeptides shorter than five residues are hydrolyzed (such as succinyl-Leu-Tyr-|-NHMec, and Leu-Tyr-Leu-|-Tyr-Trp, in which cleavage of the -Tyr-|-Leu- and -Tyr-|-Trp bonds also occurs).. Cleaves peptides in various proteins in a process that requires ATP hydrolysis. Has a chymotrypsin-like activity. Plays a major role in the degradation of misfolded proteins. The chain is ATP-dependent Clp protease proteolytic subunit from Drimys granadensis.